Here is a 441-residue protein sequence, read N- to C-terminus: ATP-dependent protease ATPase subunit HslU (441 aa).

Residues Ile-18, 60–65 (GVGKTE), Asp-254, Glu-319, and Arg-391 contribute to the ATP site.

The protein belongs to the ClpX chaperone family. HslU subfamily. A double ring-shaped homohexamer of HslV is capped on each side by a ring-shaped HslU homohexamer. The assembly of the HslU/HslV complex is dependent on binding of ATP.

The protein resides in the cytoplasm. In terms of biological role, ATPase subunit of a proteasome-like degradation complex; this subunit has chaperone activity. The binding of ATP and its subsequent hydrolysis by HslU are essential for unfolding of protein substrates subsequently hydrolyzed by HslV. HslU recognizes the N-terminal part of its protein substrates and unfolds these before they are guided to HslV for hydrolysis. In Shewanella piezotolerans (strain WP3 / JCM 13877), this protein is ATP-dependent protease ATPase subunit HslU.